The sequence spans 180 residues: Chromosome-anchoring protein RacA (180 aa).

Residues Thr-5–Gln-25 constitute a DNA-binding region (H-T-H motif). Residues His-90 to Glu-150 are a coiled coil.

This sequence belongs to the RacA family.

Its subcellular location is the cytoplasm. Required for the formation of axial filaments and for anchoring the origin regions at the cell poles in sporulating cells, thus ensuring proper chromosome segregation in the prespore. Binds in a dispersed manner throughout the chromosome but preferentially to sites clustered in the origin portion of the chromosome, causing condensation of the chromosome and its remodeling into an elongated, anchored structure. The polypeptide is Chromosome-anchoring protein RacA (Bacillus anthracis (strain A0248)).